Reading from the N-terminus, the 164-residue chain is Protein-export protein SecB (164 aa).

It belongs to the SecB family. In terms of assembly, homotetramer, a dimer of dimers. One homotetramer interacts with 1 SecA dimer.

Its subcellular location is the cytoplasm. Its function is as follows. One of the proteins required for the normal export of preproteins out of the cell cytoplasm. It is a molecular chaperone that binds to a subset of precursor proteins, maintaining them in a translocation-competent state. It also specifically binds to its receptor SecA. The polypeptide is Protein-export protein SecB (Stutzerimonas stutzeri (strain A1501) (Pseudomonas stutzeri)).